The primary structure comprises 253 residues: MLIEQFICRKDNFGVLIHDEKSGMTAAIDAPESKAIHNALKRRNWTLHTIFVTHHHHDHVEALAELKQVYNAIVFGPAAEKNKIYHLDQTLQSDEKLLFGSQSLLALSTPGHTLGALSYYFPEKKLLFAGDTLFSLGCGRLFEGTAVQMLNSLKKLCKLPDETLLYCGHEYTKNNALFALTLDPHNQKLQQRAEEVLSLRAKNAMTLPVTLGQEKATNPFLRWNDPAIRKNLSMKDSTDEEVFAEIRKRKDNF.

Zn(2+)-binding residues include histidine 54, histidine 56, aspartate 58, histidine 59, histidine 112, aspartate 131, and histidine 169.

The protein belongs to the metallo-beta-lactamase superfamily. Glyoxalase II family. As to quaternary structure, monomer. Zn(2+) is required as a cofactor.

The catalysed reaction is an S-(2-hydroxyacyl)glutathione + H2O = a 2-hydroxy carboxylate + glutathione + H(+). It participates in secondary metabolite metabolism; methylglyoxal degradation; (R)-lactate from methylglyoxal: step 2/2. Thiolesterase that catalyzes the hydrolysis of S-D-lactoyl-glutathione to form glutathione and D-lactic acid. This is Hydroxyacylglutathione hydrolase from Bartonella tribocorum (strain CIP 105476 / IBS 506).